A 226-amino-acid chain; its full sequence is uncharacterized protein (226 aa).

Residues 18-219 (LTIRNYTETD…YGVLMEWKNV (202 aa)) enclose the N-acetyltransferase domain.

Belongs to the acetyltransferase family.

This is an uncharacterized protein from Bacillus subtilis (strain 168).